Consider the following 326-residue polypeptide: Vacuolar protein sorting-associated protein 26A-B (326 aa).

The protein belongs to the VPS26 family. Component of the heterotrimeric retromer cargo-selective complex (CSC) which is believed to associate with variable sorting nexins to form functionally distinct retromer complex variants.

Its subcellular location is the cytoplasm. It is found in the endosome membrane. The protein resides in the early endosome. Functionally, acts as a component of the retromer cargo-selective complex (CSC). The CSC is believed to be the core functional component of retromer or respective retromer complex variants acting to prevent missorting of selected transmembrane cargo proteins into the lysosomal degradation pathway. Retromer mediates retrograde transport of cargo proteins from endosomes to the trans-Golgi network (TGN). This is Vacuolar protein sorting-associated protein 26A-B (vps26a-b) from Xenopus laevis (African clawed frog).